Here is a 405-residue protein sequence, read N- to C-terminus: uncharacterized protein (405 aa).

Helical transmembrane passes span 9-29, 41-61, 74-94, 98-118, 138-158, 168-190, 227-247, 252-272, 291-311, and 373-393; these read VFAL…VTIV, VFLA…ASFC, VLAG…YSVT, QAFF…GAFF, ANGV…GLGG, LVVG…LHVN, ALAG…AVLH, WWGM…VIAI, LVMS…LCAL, and IAFI…LAQP.

This sequence belongs to the major facilitator superfamily. Drug:H(+) antiporter-3 (DHA3) (TC 2.A.1.21) family.

It is found in the cell membrane. This is an uncharacterized protein from Bacillus subtilis (strain 168).